The chain runs to 400 residues: Argininosuccinate synthase (400 aa).

8–16 (AYSGGLDTS) contributes to the ATP binding site. Residues Tyr87 and Ser92 each coordinate L-citrulline. Gly117 provides a ligand contact to ATP. The L-aspartate site is built by Thr119, Asn123, and Asp124. Asn123 is a binding site for L-citrulline. Residues Arg127, Ser175, Glu259, and Tyr271 each contribute to the L-citrulline site.

Belongs to the argininosuccinate synthase family. Type 1 subfamily. In terms of assembly, homotetramer.

The protein localises to the cytoplasm. It carries out the reaction L-citrulline + L-aspartate + ATP = 2-(N(omega)-L-arginino)succinate + AMP + diphosphate + H(+). Its pathway is amino-acid biosynthesis; L-arginine biosynthesis; L-arginine from L-ornithine and carbamoyl phosphate: step 2/3. The chain is Argininosuccinate synthase from Frankia casuarinae (strain DSM 45818 / CECT 9043 / HFP020203 / CcI3).